The primary structure comprises 491 residues: UDP-GalNAc:beta-1,3-N-acetylgalactosaminyltransferase 2 (491 aa).

At Met1–Arg2 the chain is on the cytoplasmic side. The helical; Signal-anchor for type II membrane protein transmembrane segment at Ser3 to Thr23 threads the bilayer. At Asp24 to Ser491 the chain is on the lumenal side. N-linked (GlcNAc...) asparagine glycosylation is found at Asn167 and Asn230.

The protein belongs to the glycosyltransferase 31 family.

The protein localises to the golgi apparatus membrane. The protein resides in the endoplasmic reticulum. It carries out the reaction 3-O-(N-acetyl-beta-D-glucosaminyl-(1-&gt;4)-alpha-D-mannosyl)-L-threonyl-[protein] + UDP-N-acetyl-alpha-D-galactosamine = 3-O-[beta-D-GalNAc-(1-&gt;3)-beta-D-GlcNAc-(1-&gt;4)-alpha-D-Man]-L-Thr-[protein] + UDP + H(+). Its pathway is protein modification; protein glycosylation. Functionally, beta-1,3-N-acetylgalactosaminyltransferase that synthesizes a unique carbohydrate structure, GalNAc-beta-1-3GlcNAc, on N- and O-glycans. Has no galactose nor galactosaminyl transferase activity toward any acceptor substrate. Involved in alpha-dystroglycan (dag1) glycosylation. This chain is UDP-GalNAc:beta-1,3-N-acetylgalactosaminyltransferase 2 (b3galnt2), found in Danio rerio (Zebrafish).